Consider the following 103-residue polypeptide: Large ribosomal subunit protein bL21 (103 aa).

This sequence belongs to the bacterial ribosomal protein bL21 family. Part of the 50S ribosomal subunit. Contacts protein L20.

Its function is as follows. This protein binds to 23S rRNA in the presence of protein L20. The polypeptide is Large ribosomal subunit protein bL21 (Azoarcus sp. (strain BH72)).